We begin with the raw amino-acid sequence, 187 residues long: Lysozyme 3 (187 aa).

The signal sequence occupies residues 1 to 18; that stretch reads MNGLFLFCVATTAALAYG. Residues 68–183 form the I-type lysozyme domain; it reads TGIVSQQCLQ…WSHVHAQGCS (116 aa). 6 disulfide bridges follow: cysteine 75-cysteine 151, cysteine 80-cysteine 86, cysteine 91-cysteine 100, cysteine 113-cysteine 133, cysteine 123-cysteine 129, and cysteine 147-cysteine 165. Glutamate 83 acts as the Proton donor in catalysis. The active-site Nucleophile is the aspartate 94. 106 to 112 provides a ligand contact to substrate; it reads KEGYWHD. Substrate contacts are provided by residues tyrosine 137 and 158 to 160; that span reads HNG.

As to expression, highest levels of expression detected in the digestive glands. Lower levels in the mantle, labial palps, gills and style-midgut sac, and lowest levels detected in the hemocytes. Not detected in the gonads.

Its subcellular location is the secreted. It carries out the reaction Hydrolysis of (1-&gt;4)-beta-linkages between N-acetylmuramic acid and N-acetyl-D-glucosamine residues in a peptidoglycan and between N-acetyl-D-glucosamine residues in chitodextrins.. Functionally, has antibacterial activity against the Gram-negative bacterium E.coli. No antibacterial activity detected against the Gram-negative bacterium V.vulnificus. The chain is Lysozyme 3 from Crassostrea virginica (Eastern oyster).